The primary structure comprises 308 residues: Pseudouridine-5'-phosphate glycosidase (308 aa).

The active-site Proton donor is the Glu-28. Residues Lys-89 and Val-109 each coordinate substrate. Asp-141 contributes to the Mn(2+) binding site. 143 to 145 provides a ligand contact to substrate; that stretch reads SAD. The active-site Nucleophile is Lys-162.

This sequence belongs to the pseudouridine-5'-phosphate glycosidase family. In terms of assembly, homotrimer. Mn(2+) is required as a cofactor.

It carries out the reaction D-ribose 5-phosphate + uracil = psi-UMP + H2O. In terms of biological role, catalyzes the reversible cleavage of pseudouridine 5'-phosphate (PsiMP) to ribose 5-phosphate and uracil. Functions biologically in the cleavage direction, as part of a pseudouridine degradation pathway. The polypeptide is Pseudouridine-5'-phosphate glycosidase (Brachyspira hyodysenteriae (strain ATCC 49526 / WA1)).